Consider the following 275-residue polypeptide: Glycerol-3-phosphate dehydrogenase [NAD(P)+] (275 aa).

NADPH contacts are provided by Trp12, Arg32, and Lys105. Lys105, Gly133, and Thr135 together coordinate sn-glycerol 3-phosphate. Ala137 contributes to the NADPH binding site. Residues Lys188, Asp241, Ser251, Arg252, and Asn253 each contribute to the sn-glycerol 3-phosphate site. Catalysis depends on Lys188, which acts as the Proton acceptor. Arg252 contacts NADPH.

The protein belongs to the NAD-dependent glycerol-3-phosphate dehydrogenase family.

The protein resides in the cytoplasm. The catalysed reaction is sn-glycerol 3-phosphate + NAD(+) = dihydroxyacetone phosphate + NADH + H(+). The enzyme catalyses sn-glycerol 3-phosphate + NADP(+) = dihydroxyacetone phosphate + NADPH + H(+). It functions in the pathway membrane lipid metabolism; glycerophospholipid metabolism. In terms of biological role, catalyzes the reduction of the glycolytic intermediate dihydroxyacetone phosphate (DHAP) to sn-glycerol 3-phosphate (G3P), the key precursor for phospholipid synthesis. The polypeptide is Glycerol-3-phosphate dehydrogenase [NAD(P)+] (Paramagnetospirillum magneticum (strain ATCC 700264 / AMB-1) (Magnetospirillum magneticum)).